We begin with the raw amino-acid sequence, 194 residues long: uncharacterized protein (194 aa).

An SIS domain is found at 34-192 (VMQCLLGGNK…CELVDQTLFP (159 aa)).

It belongs to the SIS family. DiaA subfamily.

This is an uncharacterized protein from Haemophilus influenzae (strain ATCC 51907 / DSM 11121 / KW20 / Rd).